The following is a 549-amino-acid chain: Threonine--tRNA ligase catalytic subunit (549 aa).

Residues 142–437 (DHRIIGDRLD…LLEHFRGKLP (296 aa)) are catalytic. Residues C235, H286, and H414 each contribute to the Zn(2+) site.

Belongs to the class-II aminoacyl-tRNA synthetase family. In terms of assembly, homodimer. Probably interacts with its editing subunit. Zn(2+) serves as cofactor.

It localises to the cytoplasm. It catalyses the reaction tRNA(Thr) + L-threonine + ATP = L-threonyl-tRNA(Thr) + AMP + diphosphate + H(+). In terms of biological role, catalyzes the attachment of threonine to tRNA(Thr) in a two-step reaction: L-threonine is first activated by ATP to form Thr-AMP and then transferred to the acceptor end of tRNA(Thr). Also activates L-serine and transfers it to tRNA(Thr) but cannot deacylate incorrectly charged amino acid; unlike most archaea the editing function is found in a freestanding protein. This Sulfolobus acidocaldarius (strain ATCC 33909 / DSM 639 / JCM 8929 / NBRC 15157 / NCIMB 11770) protein is Threonine--tRNA ligase catalytic subunit.